A 177-amino-acid polypeptide reads, in one-letter code: Large ribosomal subunit protein uL6 (177 aa).

It belongs to the universal ribosomal protein uL6 family. Part of the 50S ribosomal subunit.

This protein binds to the 23S rRNA, and is important in its secondary structure. It is located near the subunit interface in the base of the L7/L12 stalk, and near the tRNA binding site of the peptidyltransferase center. The protein is Large ribosomal subunit protein uL6 of Vibrio cholerae serotype O1 (strain ATCC 39315 / El Tor Inaba N16961).